The chain runs to 277 residues: Large ribosomal subunit protein mL46 (277 aa).

Lys-217 carries the post-translational modification N6-succinyllysine. Position 228 is an N6-acetyllysine (Lys-228). Lys-246 carries the post-translational modification N6-succinyllysine.

It belongs to the mitochondrion-specific ribosomal protein mL46 family. In terms of assembly, component of the mitochondrial ribosome large subunit (39S) which comprises a 16S rRNA and about 50 distinct proteins.

It is found in the mitochondrion. The protein is Large ribosomal subunit protein mL46 (Mrpl46) of Rattus norvegicus (Rat).